A 380-amino-acid chain; its full sequence is Chaperone protein DnaJ (380 aa).

A J domain is found at 5 to 69 (DYYEILGVSK…QKRAHYDQFG (65 aa)). The segment at 135–217 (GKETDIEIPS…CGGTGRVKRR (83 aa)) adopts a CR-type zinc-finger fold. Residues Cys148, Cys151, Cys165, Cys168, Cys191, Cys194, Cys205, and Cys208 each coordinate Zn(2+). 4 CXXCXGXG motif repeats span residues 148–155 (CNTCHGTG), 165–172 (CPHCHGAG), 191–198 (CPYCGGTG), and 205–212 (CTTCGGTG).

The protein belongs to the DnaJ family. In terms of assembly, homodimer. Zn(2+) is required as a cofactor.

The protein resides in the cytoplasm. Participates actively in the response to hyperosmotic and heat shock by preventing the aggregation of stress-denatured proteins and by disaggregating proteins, also in an autonomous, DnaK-independent fashion. Unfolded proteins bind initially to DnaJ; upon interaction with the DnaJ-bound protein, DnaK hydrolyzes its bound ATP, resulting in the formation of a stable complex. GrpE releases ADP from DnaK; ATP binding to DnaK triggers the release of the substrate protein, thus completing the reaction cycle. Several rounds of ATP-dependent interactions between DnaJ, DnaK and GrpE are required for fully efficient folding. Also involved, together with DnaK and GrpE, in the DNA replication of plasmids through activation of initiation proteins. The protein is Chaperone protein DnaJ of Geobacillus stearothermophilus (Bacillus stearothermophilus).